Here is a 241-residue protein sequence, read N- to C-terminus: Uridylate kinase (241 aa).

Position 12–15 (12–15) interacts with ATP; sequence KLSG. Residues 20 to 25 are involved in allosteric activation by GTP; sequence GDKGTG. Glycine 54 contacts UMP. The ATP site is built by glycine 55 and arginine 59. Residues aspartate 74 and 135-142 contribute to the UMP site; that span reads TGSPYFST. ATP-binding residues include asparagine 163, tyrosine 169, and aspartate 172.

The protein belongs to the UMP kinase family. Homohexamer.

It localises to the cytoplasm. The enzyme catalyses UMP + ATP = UDP + ADP. It functions in the pathway pyrimidine metabolism; CTP biosynthesis via de novo pathway; UDP from UMP (UMPK route): step 1/1. With respect to regulation, allosterically activated by GTP. Inhibited by UTP. Functionally, catalyzes the reversible phosphorylation of UMP to UDP. This Pediococcus pentosaceus (strain ATCC 25745 / CCUG 21536 / LMG 10740 / 183-1w) protein is Uridylate kinase.